The chain runs to 189 residues: MSYLRPSLVMLILLTLITGIAYPLLTTGLSQLLFSGAANGSLLYQGDKVVGSALIGQNFTKPEYFWGRPSATADSAYNAMASAGSNLAATNPALDKAIAERAAQLRQANPAMKGPIPVDLLTASGSGLDPQISLAAAQYQLARVAAARQLAPEQITKLIDESTDQATPNFMGESVVNVLKLNLALDALK.

The chain crosses the membrane as a helical span at residues 8–28 (LVMLILLTLITGIAYPLLTTG).

Belongs to the KdpC family. As to quaternary structure, the system is composed of three essential subunits: KdpA, KdpB and KdpC.

The protein resides in the cell inner membrane. Functionally, part of the high-affinity ATP-driven potassium transport (or Kdp) system, which catalyzes the hydrolysis of ATP coupled with the electrogenic transport of potassium into the cytoplasm. This subunit acts as a catalytic chaperone that increases the ATP-binding affinity of the ATP-hydrolyzing subunit KdpB by the formation of a transient KdpB/KdpC/ATP ternary complex. This Serratia proteamaculans (strain 568) protein is Potassium-transporting ATPase KdpC subunit.